The primary structure comprises 676 residues: MLPILLSVALLALSSARSPFFDLEDANSNSAEKFLRPPPGGGPPRPPPPEESQGEGHQKRPRPPGDGPEQGPAPPGARPPPGPPPPGPPPPGPAPPGARPPPGPPPPGPPPPGPAPPGARPPPGPPPPGPPPPGPAPPGARPPPGPPPPGPPPPGPAPPGARPPPGPPPPGPPPPGPAPPGARPPPGPPPPGPPPPGPAPPGARPPPGPPPPGPPPPGPAPPGARPPPGPPPPGPPPPGPAPPGARPPPGPPPLGPPPPGPAPPGARPPPGPPPPGPPPPGPAPPGARPPPGPPPPGPPPPGPAPPGARPPPGPPPPGPPPPGPAPPGARPPPGPPPPGPPPPGPAPPGARPPPGPPPPGPPPPGPAPPGARPPPGPPPPGPPPPGPAPPGARPPPGPPPPGPPPPGPAPPGARPPPPPPPPADEPQQGPAPSGDKPKKKPPPPAGPPPPGPPSPGPAPPGARPPPGPPPPGPPPPGPAPPGARPPPGPPPPGPPPPGPAPPGARPPPGPPPPGPPPPGPAPPGARPPPGPPPPGPPPPGPAPPGARPPPGPPPPGPPPPGPAPPGARPPPGPPPPGPPPPGPAPPGARPPPGPPPPGPPPPGPAPPGARPPPGPPPPGPPPPGPAPPGARPPPGPPPPGPPPPGPAPPGARPPPGPPPPPPGPSPPRPPPGPPPQ.

The N-terminal stretch at 1 to 16 is a signal peptide; the sequence is MLPILLSVALLALSSA. 2 positions are modified to phosphoserine: serine 28 and serine 30. The tract at residues 29–676 is disordered; sequence NSAEKFLRPP…PRPPPGPPPQ (648 aa). 3 stretches are compositionally biased toward pro residues: residues 36–50, 71–424, and 442–676; these read RPPP…PPPE, GPAP…PPAD, and PPPA…PPPQ. Residues 409 to 457 constitute a propeptide that is removed on maturation; it reads APPGARPPPPPPPPADEPQQGPAPSGDKPKKKPPPPAGPPPPGPPSPGP.

In terms of tissue distribution, acinar cells and secretory granules of the parotid gland.

Its subcellular location is the secreted. In terms of biological role, the parotid hormone stimulates dentinal fluid transport in teeth. The polypeptide is Basic proline-rich protein (Sus scrofa (Pig)).